The following is a 340-amino-acid chain: Uroporphyrinogen decarboxylase (340 aa).

Substrate-binding positions include 21–25 (RQAGR), F40, D71, Y146, S201, and H316.

The protein belongs to the uroporphyrinogen decarboxylase family. In terms of assembly, homodimer.

It localises to the cytoplasm. It carries out the reaction uroporphyrinogen III + 4 H(+) = coproporphyrinogen III + 4 CO2. It participates in porphyrin-containing compound metabolism; protoporphyrin-IX biosynthesis; coproporphyrinogen-III from 5-aminolevulinate: step 4/4. Its function is as follows. Catalyzes the decarboxylation of four acetate groups of uroporphyrinogen-III to yield coproporphyrinogen-III. The chain is Uroporphyrinogen decarboxylase from Rickettsia bellii (strain RML369-C).